Reading from the N-terminus, the 700-residue chain is Beta-galactosidase BgaB (700 aa).

Substrate contacts are provided by R122 and N160. The Proton donor role is filled by E161. Residue E320 is the Nucleophile of the active site. Residues W328 and E368 to H371 each bind substrate.

This sequence belongs to the glycosyl hydrolase 42 family. In terms of assembly, trimer. Tetramer. In terms of processing, the N-terminus is blocked.

The catalysed reaction is Hydrolysis of terminal non-reducing beta-D-galactose residues in beta-D-galactosides.. Inhibited by high substrate concentrations (100 mg/ml). No effect on activity with various EDTA concentrations (0-1 mM). 20-fold higher activity when cells grown on TOS than when cells grown on galactose, glucose and lactose. Involved in the hydrolysis of transgalactooligosaccharides (TOS). Highly active towards Gal(beta1-4)Gal and Gal(beta1-4)-Gal-containing oligosaccharides. Low activity towards Gal(beta1-3)Gal, lactose and Gal(beta1-3)GalOMe. No activity towards Gal(beta1-6)Gal, Gal(beta1-4)Man, Gal(alpha1-4)Gal, Gal(alpha1-3)Gal(beta1-4)Gal, lactulose, 3'fucosyllactose, lacto-N-fucopentaose I, lacto-N-fucopentaose II, cellobiose, maltose or sucrose. No transglycosylation activity is found at high substrate concentrations (100 mg/ml) and only low transglycosylation activity at lower substrate concentrations (10 mg/ml). This Bifidobacterium adolescentis (strain ATCC 15703 / DSM 20083 / NCTC 11814 / E194a) protein is Beta-galactosidase BgaB (bgaB).